The primary structure comprises 752 residues: THO complex subunit HPR1 (752 aa).

S234 is subject to Phosphoserine. Positions R648–K752 are disordered. Over residues E692–S702 the composition is skewed to basic and acidic residues. The span at P720–K752 shows a compositional bias: polar residues.

In terms of assembly, component of the THO complex, which is composed of HPR1, MFT1, THO2 and THP2. Together with SUB2, TEX1 and YRA1, THO forms the transcription/export (TREX) complex. THO associates with DNA and RNA in vitro.

Its subcellular location is the nucleus. In terms of biological role, component the THO subcomplex of the TREX complex, which operates in coupling transcription elongation to mRNA export. The THO complex is recruited to transcribed genes and moves along the gene with the elongating polymerase during transcription. THO is important for stabilizing nascent RNA in the RNA polymerase II elongation complex by preventing formation of DNA:RNA hybrids behind the elongating polymerase. It functions in cotranscriptional formation of an export-competent messenger ribonucleoprotein particle (mRNP) by facilitating the loading of ATP-dependent RNA helicase SUB2 and the mRNA export factor YRA1 along the nascent mRNA. This Saccharomyces cerevisiae (strain ATCC 204508 / S288c) (Baker's yeast) protein is THO complex subunit HPR1 (HPR1).